A 119-amino-acid polypeptide reads, in one-letter code: Beta-2-microglobulin (119 aa).

The N-terminal stretch at 1–20 (MARLVVVALLVLLCLSGLEA) is a signal peptide. The Ig-like C1-type domain maps to 25–114 (PKIQVYSRHP…VTFTAPKTVK (90 aa)). C45 and C100 are joined by a disulfide.

This sequence belongs to the beta-2-microglobulin family. In terms of assembly, heterodimer of an alpha chain and a beta chain. Beta-2-microglobulin is the beta-chain of major histocompatibility complex class I molecules.

It is found in the secreted. Its function is as follows. Component of the class I major histocompatibility complex (MHC). Involved in the presentation of peptide antigens to the immune system. This Chiropotes satanas (Brown-bearded saki) protein is Beta-2-microglobulin (B2M).